The sequence spans 1333 residues: NPC1-like intracellular cholesterol transporter 1 (1333 aa).

An N-terminal signal peptide occupies residues 1 to 20; the sequence is MAAAWQGWLLWALLLNSAQG. Over 21–284 the chain is Extracellular; it reads ELYTPTHKAG…SFYMGRMPGW (264 aa). Cystine bridges form between cysteine 32–cysteine 90, cysteine 38–cysteine 56, cysteine 77–cysteine 125, cysteine 91–cysteine 129, cysteine 113–cysteine 254, cysteine 116–cysteine 172, cysteine 189–cysteine 197, cysteine 243–cysteine 259, and cysteine 256–cysteine 263. A helical transmembrane segment spans residues 285–305; sequence LALIIIFTAVFVLLSVVLVYL. Residues 306–352 are Cytoplasmic-facing; that stretch reads RVASNRNKNKTAGSQEAPNLPRKRRFSPHTVLGRFFESWGTRVASWP. Residues 353-373 form a helical membrane-spanning segment; the sequence is LTVLALSFIVVIALSVGLTFI. Residues 374-632 lie on the Extracellular side of the membrane; it reads ELTTDPVELW…DEINRTTIQD (259 aa). 2 disulfides stabilise this stretch: cysteine 471–cysteine 485 and cysteine 525–cysteine 542. In terms of domain architecture, SSD spans 632 to 797; the sequence is DLPVFAISYL…MTAFVALLSL (166 aa). Residues 633-653 form a helical membrane-spanning segment; sequence LPVFAISYLIVFLYISLALGS. At 654-665 the chain is on the cytoplasmic side; the sequence is YSRWSRVAVDSK. The helical transmembrane segment at 666-686 threads the bilayer; the sequence is ATLGLGGVAVVLGAVVAAMGF. At 687-696 the chain is on the extracellular side; it reads YSYLGVPSSL. A helical membrane pass occupies residues 697–717; that stretch reads VIIQVVPFLVLAVGADNIFIF. The Cytoplasmic portion of the chain corresponds to 718 to 742; the sequence is VLEYQRLPRMPGEQREAHIGRTLGS. Residues 743-763 traverse the membrane as a helical segment; sequence VAPSMLLCSLSEAICFFLGAL. At 764–776 the chain is on the extracellular side; sequence TSMPAVRTFALTS. A helical membrane pass occupies residues 777-797; that stretch reads GLAIIFDFLLQMTAFVALLSL. At 798–846 the chain is on the cytoplasmic side; that stretch reads DSKRQEASRPDVVCCFSSRNLPPPKQKEGLLLCFFRKIYTPFLLHRFIR. The chain crosses the membrane as a helical span at residues 847 to 867; that stretch reads PVVLLLFLVLFGANLYLMCNI. Over 868–1113 the chain is Extracellular; sequence SVGLDQDLAL…QQYLTVLPEG (246 aa). Disulfide bonds link cysteine 920-cysteine 925, cysteine 967-cysteine 1025, and cysteine 981-cysteine 990. Residues 1114-1134 traverse the membrane as a helical segment; sequence IFTLALCFVPTFVVCYLLLGL. The Cytoplasmic segment spans residues 1135–1142; it reads DIRSGILN. Residues 1143-1163 traverse the membrane as a helical segment; that stretch reads LLSIIMILVDTIGLMAVWGIS. Topologically, residues 1164–1165 are extracellular; sequence YN. Residues 1166–1186 form a helical membrane-spanning segment; that stretch reads AVSLINLVTAVGMSVEFVSHI. Residues 1187–1206 are Cytoplasmic-facing; sequence TRSFAVSTKPTRLERAKDAT. Residues 1207-1227 traverse the membrane as a helical segment; that stretch reads IFMGSAVFAGVAMTNFPGILI. Residues 1228-1242 are Extracellular-facing; sequence LGFAQAQLIQIFFFR. A helical membrane pass occupies residues 1243–1263; the sequence is LNLLITLLGLLHGLVFLPVVL. Topologically, residues 1264–1333 are cytoplasmic; sequence SYLGPDVNQA…SSLPKSDQKF (70 aa).

The protein belongs to the patched family. As to quaternary structure, interacts with RAB11A, MYO5B and RAB11FIP2. Interaction with RAB11A, MYO5B and RAB11FIP2 is required for proper transport to the plasma membrane upon cholesterol depletion. Interacts with NPC2. Interacts with LIMA1. Highly glycosylated. In terms of tissue distribution, expressed in small intestine, stomach and muscle, along with detectable expression in lung, heart, gall bladder, brain, testis, skin and liver. Expression in liver is extremely low.

It localises to the apical cell membrane. The protein localises to the cell membrane. It catalyses the reaction cholesterol(in) = cholesterol(out). The enzyme catalyses sitosterol(out) = sitosterol(in). Plays a major role in cholesterol homeostasis. Critical for the uptake of cholesterol across the plasma membrane of the intestinal enterocyte. Involved in plant sterol absorption, it transports sitosterol, although at lower rates than cholesterol. May have a function in the transport of multiple lipids and their homeostasis, thereby influencing lipid metabolism regulation. May be involved in caveolin trafficking from the plasma membrane. Acts as a negative regulator of NPC2 and down-regulates its expression and secretion by inhibiting its maturation and accelerating its degradation. This chain is NPC1-like intracellular cholesterol transporter 1, found in Mus musculus (Mouse).